The primary structure comprises 228 residues: Putative N-acetylmannosamine-6-phosphate 2-epimerase (228 aa).

This sequence belongs to the NanE family.

It carries out the reaction an N-acyl-D-glucosamine 6-phosphate = an N-acyl-D-mannosamine 6-phosphate. It functions in the pathway amino-sugar metabolism; N-acetylneuraminate degradation; D-fructose 6-phosphate from N-acetylneuraminate: step 3/5. In terms of biological role, converts N-acetylmannosamine-6-phosphate (ManNAc-6-P) to N-acetylglucosamine-6-phosphate (GlcNAc-6-P). The polypeptide is Putative N-acetylmannosamine-6-phosphate 2-epimerase (Lactiplantibacillus plantarum (strain ATCC BAA-793 / NCIMB 8826 / WCFS1) (Lactobacillus plantarum)).